The primary structure comprises 492 residues: Catalase isozyme 1 (492 aa).

Residues His65 and Asn138 contribute to the active site. Tyr348 is a binding site for heme.

Belongs to the catalase family. In terms of assembly, homotetramer. Heme is required as a cofactor.

The protein resides in the cytoplasm. It is found in the cytosol. Its subcellular location is the peroxisome matrix. It catalyses the reaction 2 H2O2 = O2 + 2 H2O. Inhibited by salicylic acid. Its function is as follows. Catalyzes the degradation of hydrogen peroxide (H(2)O(2)) generated by peroxisomal oxidases to water and oxygen, thereby protecting cells from the toxic effects of hydrogen peroxide. This Nicotiana tabacum (Common tobacco) protein is Catalase isozyme 1 (CAT-1).